Consider the following 336-residue polypeptide: MLYRIARAGIFKLDAEKAHDLAIQNFKRFNGTPLDIFYRQNLASKPVEVMGIKFKNPVGLAAGLDKNGECIEAFGAMGFGFVEVGTVTPRPQSGNDKPRLFRLIEAEGIINRMGFNNLGVDNLVENVKKAKYDGVIGINIGKNKDTPIEKGTEDYLICMEKVYQYAGYIAINISSPNTPGLRTLQYGEALDDLLSQLKEKQKELAEKYGKYVPVALKIAPDLEDDELTQIAESLIKYKIDGVIATNTTLDRSMVEGMKHAEEMGGLSGRPVQTRSTEVVRRLKELLGDNLPIIGVGGIDSYVAAKEKMVAGAELVQVYSGFIYKGPGLVRDIVNNI.

FMN contacts are provided by residues 62–66 (AGLDK) and Thr-86. Lys-66 contributes to the substrate binding site. 111–115 (NRMGF) contributes to the substrate binding site. Positions 139 and 172 each coordinate FMN. Residue Asn-172 participates in substrate binding. The active-site Nucleophile is the Ser-175. Asn-177 contacts substrate. Residues Lys-217 and Thr-245 each coordinate FMN. 246 to 247 (NT) contacts substrate. Residues Gly-268, Gly-297, and 318-319 (YS) contribute to the FMN site.

It belongs to the dihydroorotate dehydrogenase family. Type 2 subfamily. As to quaternary structure, monomer. FMN is required as a cofactor.

Its subcellular location is the cell membrane. It catalyses the reaction (S)-dihydroorotate + a quinone = orotate + a quinol. It participates in pyrimidine metabolism; UMP biosynthesis via de novo pathway; orotate from (S)-dihydroorotate (quinone route): step 1/1. Its function is as follows. Catalyzes the conversion of dihydroorotate to orotate with quinone as electron acceptor. This Aliivibrio fischeri (strain MJ11) (Vibrio fischeri) protein is Dihydroorotate dehydrogenase (quinone).